The following is a 225-amino-acid chain: Ribose-5-phosphate isomerase A (225 aa).

Substrate-binding positions include 26–29 (TGST), 82–85 (DGAD), and 95–98 (KGGG). E104 (proton acceptor) is an active-site residue. K122 is a substrate binding site.

This sequence belongs to the ribose 5-phosphate isomerase family. As to quaternary structure, homodimer.

The enzyme catalyses aldehydo-D-ribose 5-phosphate = D-ribulose 5-phosphate. The protein operates within carbohydrate degradation; pentose phosphate pathway; D-ribose 5-phosphate from D-ribulose 5-phosphate (non-oxidative stage): step 1/1. Catalyzes the reversible conversion of ribose-5-phosphate to ribulose 5-phosphate. This Streptococcus gordonii (strain Challis / ATCC 35105 / BCRC 15272 / CH1 / DL1 / V288) protein is Ribose-5-phosphate isomerase A.